A 75-amino-acid chain; its full sequence is High-potential iron-sulfur protein (75 aa).

C38, C41, C54, and C68 together coordinate [4Fe-4S] cluster.

As to quaternary structure, homodimer. Monomer at different ionic strengths.

Specific class of high-redox-potential 4Fe-4S ferredoxins. Functions in anaerobic electron transport in most purple and in some other photosynthetic bacteria and in at least one genus (Paracoccus) of halophilic, denitrifying bacteria. Competent in photosynthetic electron transfer to oxidized cytochrome bc1 complex via the membrane-bound c-type tetraheme. The sequence is that of High-potential iron-sulfur protein (hip) from Rhodoferax fermentans.